A 214-amino-acid polypeptide reads, in one-letter code: Acetoin utilization protein AcuB (214 aa).

2 consecutive CBS domains span residues 7-66 and 78-135; these read MKRD…ENKR and MKKD…GADQ.

As to quaternary structure, interacts with YabA.

Its pathway is ketone degradation; acetoin degradation. Its function is as follows. Role in growth and sporulation on acetoin or butanediol. Involved in the breakdown of these compounds used as a carbon source. In Bacillus subtilis (strain 168), this protein is Acetoin utilization protein AcuB (acuB).